The sequence spans 237 residues: RNA polymerase sigma-28 factor (237 aa).

Residues 1–19 (MSLFAAIGYMVREVFVFVS) constitute a propeptide that is removed on maturation. The short motif at 77–90 (DLISIGTIGLIKAI) is the Polymerase core binding element. A DNA-binding region (H-T-H motif) is located at residues 197-206 (QREIAKALGI).

This sequence belongs to the sigma-70 factor family. In terms of processing, proteolytically cleaved in the N-terminus probably by a SpoIIGA homolog to yield the active peptide.

In terms of biological role, sigma factors are initiation factors that promote the attachment of RNA polymerase to specific initiation sites and are then released. This sigma factor directs the transcription of crystal protein genes, a sporulation-regulated event. This chain is RNA polymerase sigma-28 factor (sigK), found in Bacillus thuringiensis subsp. kurstaki.